The sequence spans 360 residues: Protein Wnt-2 (360 aa).

Positions 1-25 are cleaved as a signal peptide; sequence MNAPLGGIWLWLPLLLTWLTPEVSS. Cystine bridges form between cysteine 76–cysteine 87, cysteine 127–cysteine 135, cysteine 137–cysteine 157, cysteine 206–cysteine 220, cysteine 208–cysteine 215, cysteine 278–cysteine 309, cysteine 294–cysteine 304, cysteine 308–cysteine 348, cysteine 324–cysteine 339, cysteine 326–cysteine 336, and cysteine 331–cysteine 332. The O-palmitoleoyl serine; by PORCN moiety is linked to residue serine 212. N-linked (GlcNAc...) asparagine glycosylation is present at asparagine 295.

Belongs to the Wnt family. Post-translationally, palmitoleoylation is required for efficient binding to frizzled receptors. Depalmitoleoylation leads to Wnt signaling pathway inhibition.

It localises to the secreted. The protein localises to the extracellular space. The protein resides in the extracellular matrix. In terms of biological role, ligand for members of the frizzled family of seven transmembrane receptors. Functions in the canonical Wnt signaling pathway that results in activation of transcription factors of the TCF/LEF family. The protein is Protein Wnt-2 (WNT2) of Dasypus novemcinctus (Nine-banded armadillo).